The primary structure comprises 420 residues: O-methyltransferase opaF (420 aa).

Residues 262 to 263, aspartate 287, and 308 to 309 contribute to the S-adenosyl-L-methionine site; these read GG and DL. The active-site Proton acceptor is histidine 328.

Belongs to the class I-like SAM-binding methyltransferase superfamily. Cation-independent O-methyltransferase family.

The protein operates within secondary metabolite biosynthesis. In terms of biological role, O-methyltransferase; part of the gene cluster that mediates the biosynthesis of oxepinamides, derivatives of anthranilyl-containing tripeptides that share an oxepin ring and a fused pyrimidinone moiety. The nonribosomal peptide synthetase (NRPS) opaA assembles the quinazolinone core with D-Phe incorporation. The first adenylation domain (A1) of opaA loads and activates anthranilic acid whereas the second A domain (A2) is for activating of L-Phe, which is then converted to D-form by the E domain. The third A domain (A3) is responsible for L-Ile activation and the terminal condensation domain C3 for cyclization and releasing the NRPS product protuboxepin K. The cytochrome P450 monooxygenase opaB then catalyzes alone the oxepin ring formation to convert protuboxepin K into protuboxepin A. The flavoenzyme opaC installs subsequently one hydroxyl group at the oxepin ring, accompanied by double bond migration, to form 15-epi-oxepinamide E. The epimerase opaE changes the D-Phe residue back to L-form, leading to oxepinamide E, which is further methylated at the hydroxyl group at C-12 by the O-methyltransferase OpaF to yield oxepinamide F. In Aspergillus ustus, this protein is O-methyltransferase opaF.